The following is a 234-amino-acid chain: Peptidyl-tRNA hydrolase (234 aa).

Tyr-14 serves as a coordination point for tRNA. His-19 functions as the Proton acceptor in the catalytic mechanism. 3 residues coordinate tRNA: Phe-64, Asn-66, and Asn-112. A disordered region spans residues 187–234; it reads TGTKADEEKPKPAKSHIHQARNGVQPKKLPETGPMAEMLKKMFGPKKD.

The protein belongs to the PTH family. In terms of assembly, monomer.

It is found in the cytoplasm. The enzyme catalyses an N-acyl-L-alpha-aminoacyl-tRNA + H2O = an N-acyl-L-amino acid + a tRNA + H(+). Its function is as follows. Hydrolyzes ribosome-free peptidyl-tRNAs (with 1 or more amino acids incorporated), which drop off the ribosome during protein synthesis, or as a result of ribosome stalling. Functionally, catalyzes the release of premature peptidyl moieties from peptidyl-tRNA molecules trapped in stalled 50S ribosomal subunits, and thus maintains levels of free tRNAs and 50S ribosomes. This Allorhizobium ampelinum (strain ATCC BAA-846 / DSM 112012 / S4) (Agrobacterium vitis (strain S4)) protein is Peptidyl-tRNA hydrolase.